The following is a 352-amino-acid chain: Protein RecA (352 aa).

67 to 74 (GPESSGKT) contacts ATP.

Belongs to the RecA family.

It is found in the cytoplasm. Its function is as follows. Can catalyze the hydrolysis of ATP in the presence of single-stranded DNA, the ATP-dependent uptake of single-stranded DNA by duplex DNA, and the ATP-dependent hybridization of homologous single-stranded DNAs. It interacts with LexA causing its activation and leading to its autocatalytic cleavage. The polypeptide is Protein RecA (Chlamydia trachomatis serovar D (strain ATCC VR-885 / DSM 19411 / UW-3/Cx)).